A 199-amino-acid polypeptide reads, in one-letter code: Ribonuclease HII (199 aa).

An RNase H type-2 domain is found at 10–199; sequence HLVAGVDEVG…VKRALGLASN (190 aa). The a divalent metal cation site is built by aspartate 16, glutamate 17, and aspartate 108.

It belongs to the RNase HII family. Mn(2+) is required as a cofactor. It depends on Mg(2+) as a cofactor.

It localises to the cytoplasm. The catalysed reaction is Endonucleolytic cleavage to 5'-phosphomonoester.. Endonuclease that specifically degrades the RNA of RNA-DNA hybrids. The sequence is that of Ribonuclease HII from Klebsiella pneumoniae subsp. pneumoniae (strain ATCC 700721 / MGH 78578).